Here is an 800-residue protein sequence, read N- to C-terminus: Fibroblast growth factor receptor 3 (800 aa).

The N-terminal stretch at 1–20 (MVPLCLLLYLATLVFPPVYS) is a signal peptide. An Ig-like C2-type 1 domain is found at 21–122 (AHLLSPEPTD…YTVKVIDSLS (102 aa)). Topologically, residues 21 to 363 (AHLLSPEPTD…EMEREDDYAD (343 aa)) are extracellular. A disulfide bridge links C55 with C101. 3 N-linked (GlcNAc...) asparagine glycosylation sites follow: N77, N90, and N112. Acidic residues predominate over residues 124-136 (GDDEDYDEDEDEA). Residues 124-143 (GDDEDYDEDEDEAGNGNAEA) form a disordered region. Ig-like C2-type domains are found at residues 144 to 237 (PYWT…YQLD) and 246 to 348 (PILQ…AWLT). C169 and C221 form a disulfide bridge. N218, N255, N287, N308, and N321 each carry an N-linked (GlcNAc...) asparagine glycan. A disulfide bridge connects residues C268 and C332. Residues 364–384 (ILIYVTSCVLFILTMVIIILC) form a helical membrane-spanning segment. Topologically, residues 385-800 (RMWINTQKTL…HHHSNGVIRT (416 aa)) are cytoplasmic. Positions 460-739 (LTLGKPLGEG…RQLVEDHDRV (280 aa)) constitute a Protein kinase domain. Residues 466–474 (LGEGCFGQV) and K496 contribute to the ATP site. D605 (proton acceptor) is an active-site residue. 4 positions are modified to phosphotyrosine; by autocatalysis: Y635, Y636, Y712, and Y748. The segment covering 764–773 (DSNSTCSSGD) has biased composition (polar residues). The tract at residues 764–800 (DSNSTCSSGDDSVFAHDPLPEEPCLPKHHHSNGVIRT) is disordered.

It belongs to the protein kinase superfamily. Tyr protein kinase family. Fibroblast growth factor receptor subfamily. As to quaternary structure, monomer. Homodimer after ligand binding. Post-translationally, autophosphorylated. Binding of FGF family members together with heparan sulfate proteoglycan or heparin promotes receptor dimerization and autophosphorylation on tyrosine residues. Autophosphorylation occurs in trans between the two FGFR molecules present in the dimer.

The protein resides in the cell membrane. The enzyme catalyses L-tyrosyl-[protein] + ATP = O-phospho-L-tyrosyl-[protein] + ADP + H(+). Present in an inactive conformation in the absence of bound ligand. Ligand binding leads to dimerization and activation by autophosphorylation on tyrosine residues. Functionally, tyrosine-protein kinase that acts as a cell-surface receptor for fibroblast growth factors and plays an essential role in the regulation of cell proliferation, differentiation and apoptosis. Plays an essential role in the regulation of chondrocyte differentiation, proliferation and apoptosis, and is required for normal skeleton development. Regulates both osteogenesis and postnatal bone mineralization by osteoblasts. Promotes apoptosis in chondrocytes, but can also promote cancer cell proliferation. Phosphorylates PLCG1, CBL and FRS2. Ligand binding leads to the activation of several signaling cascades. Activation of PLCG1 leads to the production of the cellular signaling molecules diacylglycerol and inositol 1,4,5-trisphosphate. Phosphorylation of FRS2 triggers recruitment of GRB2, GAB1, PIK3R1 and SOS1, and mediates activation of RAS, MAPK1/ERK2, MAPK3/ERK1 and the MAP kinase signaling pathway, as well as of the AKT1 signaling pathway. The chain is Fibroblast growth factor receptor 3 (fgfr3) from Danio rerio (Zebrafish).